The following is a 3284-amino-acid chain: Location of vulva defective 1 (3284 aa).

A signal peptide spans 1-21; it reads MKKSNFFVLLLLAISAIQIDG. Disordered regions lie at residues 226-326, 350-505, 623-702, 827-926, and 1043-1216; these read ESTS…ITST, TTML…GTNP, VASS…ADST, STSE…ASTE, and TTTE…SLAT. Composition is skewed to low complexity over residues 227–326 and 350–500; these read STST…ITST and TTML…TTSS. Positions 827–913 are enriched in low complexity; sequence STSEVTSTTS…PSDSSSASDS (87 aa). A compositionally biased stretch (polar residues) spans 914–926; sequence MRTTTVDPDASTE. Positions 1043–1057 are enriched in low complexity; that stretch reads TTTETPPTTVSSSDD. Residues 1060–1078 show a composition bias toward gly residues; the sequence is GKTGGTGATGGTGGTGSGG. The span at 1079 to 1104 shows a compositional bias: low complexity; the sequence is SATTLSTGDAVRSTTSGSGSGQSSTG. The segment covering 1105–1127 has biased composition (gly residues); it reads SGAGGSGTTASGSGSGGSSGTGS. Residues 1128 to 1138 show a composition bias toward polar residues; sequence DGVNSGKTTAL. Over residues 1163 to 1192 the composition is skewed to low complexity; the sequence is GSGSDSNGSSGVSTKSSSGSDTSGSSDSSG. Residues 1197 to 1216 are compositionally biased toward polar residues; that stretch reads FSATAQPSTRTTKTRSSLAT. One can recognise a GAIN-B domain in the interval 2064 to 2227; sequence WNNSLQVEII…SVGAFNPTID (164 aa). Cysteines 2181 and 2209 form a disulfide. The GPS stretch occupies residues 2181 to 2227; sequence CYFYQKTSDVFNSEGMYPSDGQGMQFVNCSTDHLTMFSVGAFNPTID. The chain crosses the membrane as a helical span at residues 2245-2265; that stretch reads VMIAAVFMLVVYGCLTINAII. In terms of domain architecture, PLAT spans 2288 to 2411; that stretch reads YMYVIAVETG…GDGETERLAR (124 aa). Transmembrane regions (helical) follow at residues 2453-2473, 2496-2516, 2557-2577, 2592-2612, 2672-2692, 2945-2965, 2994-3014, 3043-3063, 3089-3109, and 3144-3164; these read DYSV…ITIL, IAFG…HILL, IIVF…MSLM, LILW…FLIL, LFIT…MVML, MLYI…YLYG, WNFM…AYTI, WEIV…CKMI, FGIA…AVLG, and FAFV…LQLY.

Belongs to the polycystin family. In terms of assembly, interacts (via PLAT domain) with atp-2 (via N-terminus) and with kin-10 (via C-terminus). Interacts (via C-terminus) with isoform a of stam-1/pqn-19 (via C-terminus). Autoproteolytically processed at the GPS region of the GAIN-B domain; this cleavage modulates receptor activity. In terms of tissue distribution, exclusively expressed in a subset of three categories of adult male sensory neurons: ray neurons, hook neurons and head cephalic (CEM) neurons.

The protein localises to the membrane. The protein resides in the cell projection. It is found in the cilium. In terms of biological role, required for two aspects of male mating behavior: response to hermaphrodite contact and vulva location. Acts in the same pathway as pkd-2 and atp-2 in response behavior. May be required for ciliary targeting of pkd-2. The sequence is that of Location of vulva defective 1 (lov-1) from Caenorhabditis elegans.